Consider the following 522-residue polypeptide: Transcription factor SPT20 homolog (522 aa).

Ser-284 carries the phosphoserine modification. 2 disordered regions span residues 361–380 (DEES…DHSN) and 408–522 (PVKM…RHES). The segment covering 412-425 (SHSSSGSASLSQVS) has biased composition (low complexity). Over residues 433-442 (TETVSVQSSV) the composition is skewed to polar residues. Residues 458–467 (SSSGNSSSGN) are compositionally biased toward low complexity. Pro residues predominate over residues 481–492 (PTPPPSSKPPTI). Residue Thr-482 is modified to Phosphothreonine. Over residues 506 to 522 (LSPAALSPASSSQRHES) the composition is skewed to low complexity. Phosphoserine occurs at positions 507 and 512.

Belongs to the SPT20 family. Interacts with ATG9A. Interacts with MAPK14.

In terms of biological role, required for MAP kinase p38 (MAPK11, MAPK12, MAPK13 and/or MAPK14) activation during gastrulation. Required for down-regulation of E-cadherin during gastrulation by regulating E-cadherin protein level downstream from NCK-interacting kinase (NIK) and independently of the regulation of transcription by FGF signaling and Snail. Required for starvation-induced ATG9A trafficking during autophagy. The protein is Transcription factor SPT20 homolog (SUPT20H) of Pongo abelii (Sumatran orangutan).